The following is a 432-amino-acid chain: 3-phosphoshikimate 1-carboxyvinyltransferase (432 aa).

Lys22, Ser23, and Arg27 together coordinate 3-phosphoshikimate. Lys22 lines the phosphoenolpyruvate pocket. Residues Gly96 and Arg127 each coordinate phosphoenolpyruvate. Ser173, Ser174, Gln175, Ser201, Asp316, Asn339, and Lys343 together coordinate 3-phosphoshikimate. Gln175 provides a ligand contact to phosphoenolpyruvate. Catalysis depends on Asp316, which acts as the Proton acceptor. Phosphoenolpyruvate-binding residues include Arg347, Arg391, and Lys416.

It belongs to the EPSP synthase family. In terms of assembly, monomer.

The protein localises to the cytoplasm. The catalysed reaction is 3-phosphoshikimate + phosphoenolpyruvate = 5-O-(1-carboxyvinyl)-3-phosphoshikimate + phosphate. The protein operates within metabolic intermediate biosynthesis; chorismate biosynthesis; chorismate from D-erythrose 4-phosphate and phosphoenolpyruvate: step 6/7. Its function is as follows. Catalyzes the transfer of the enolpyruvyl moiety of phosphoenolpyruvate (PEP) to the 5-hydroxyl of shikimate-3-phosphate (S3P) to produce enolpyruvyl shikimate-3-phosphate and inorganic phosphate. This Histophilus somni (Haemophilus somnus) protein is 3-phosphoshikimate 1-carboxyvinyltransferase.